Consider the following 114-residue polypeptide: Small ribosomal subunit protein bS6 (114 aa).

This sequence belongs to the bacterial ribosomal protein bS6 family.

Functionally, binds together with bS18 to 16S ribosomal RNA. This is Small ribosomal subunit protein bS6 from Bacteroides thetaiotaomicron (strain ATCC 29148 / DSM 2079 / JCM 5827 / CCUG 10774 / NCTC 10582 / VPI-5482 / E50).